A 546-amino-acid polypeptide reads, in one-letter code: Probable malate:quinone oxidoreductase (546 aa).

It belongs to the MQO family. Requires FAD as cofactor.

The catalysed reaction is (S)-malate + a quinone = a quinol + oxaloacetate. The protein operates within carbohydrate metabolism; tricarboxylic acid cycle; oxaloacetate from (S)-malate (quinone route): step 1/1. This Acinetobacter baumannii (strain ACICU) protein is Probable malate:quinone oxidoreductase.